The primary structure comprises 185 residues: Ribosome-recycling factor (185 aa).

Belongs to the RRF family.

It is found in the cytoplasm. In terms of biological role, responsible for the release of ribosomes from messenger RNA at the termination of protein biosynthesis. May increase the efficiency of translation by recycling ribosomes from one round of translation to another. This chain is Ribosome-recycling factor, found in Nocardioides sp. (strain ATCC BAA-499 / JS614).